The primary structure comprises 144 residues: Putative pre-16S rRNA nuclease (144 aa).

Belongs to the YqgF nuclease family.

The protein resides in the cytoplasm. In terms of biological role, could be a nuclease involved in processing of the 5'-end of pre-16S rRNA. This is Putative pre-16S rRNA nuclease from Lacticaseibacillus casei (strain BL23) (Lactobacillus casei).